The following is a 199-amino-acid chain: dITP/XTP pyrophosphatase (199 aa).

Residue threonine 8–lysine 13 coordinates substrate. The active-site Proton acceptor is the aspartate 68. Aspartate 68 is a Mg(2+) binding site. Substrate is bound by residues serine 69, phenylalanine 155–asparagine 158, lysine 177, and histidine 182–arginine 183.

The protein belongs to the HAM1 NTPase family. In terms of assembly, homodimer. Mg(2+) serves as cofactor.

The catalysed reaction is XTP + H2O = XMP + diphosphate + H(+). It carries out the reaction dITP + H2O = dIMP + diphosphate + H(+). The enzyme catalyses ITP + H2O = IMP + diphosphate + H(+). Its function is as follows. Pyrophosphatase that catalyzes the hydrolysis of nucleoside triphosphates to their monophosphate derivatives, with a high preference for the non-canonical purine nucleotides XTP (xanthosine triphosphate), dITP (deoxyinosine triphosphate) and ITP. Seems to function as a house-cleaning enzyme that removes non-canonical purine nucleotides from the nucleotide pool, thus preventing their incorporation into DNA/RNA and avoiding chromosomal lesions. The sequence is that of dITP/XTP pyrophosphatase from Borrelia recurrentis (strain A1).